A 67-amino-acid polypeptide reads, in one-letter code: Arasin 2 (67 aa).

A signal peptide spans 1 to 25; the sequence is MERRTLLVVLLVCSCVVAAAAEASP. The segment at 22–44 is disordered; sequence EASPSRWPSPGRPRPFPGRPNPI. Over residues 31–44 the composition is skewed to pro residues; the sequence is PGRPRPFPGRPNPI. Intrachain disulfides connect Cys-50–Cys-59 and Cys-52–Cys-57.

As to quaternary structure, interacts with chitin through the N-terminal region (26-48). This interaction may be important, since chitin is a component of the fungal cell wall, as well as of the crab exoskeleton (permitting a possible action of arasin in wound healing in case of lesions). Post-translationally, disulfide bonds are important for activity especially against Gram-negative bacteria, since the linearization of the peptide causes a strong decrease of activity on these bacteria. As to expression, mainly expressed in hemocytes. No or very low expression in heart, gills, inestines, and epidermis.

In terms of biological role, antimicrobial peptide that has a large activity spectrum with activity against Gram-positive, Gram-negative bacteria, as well as against fungi. Shows activity at micromolar concentrations. Displays minimal inhibitory concentration (MIC) values lower than minimal bactericidal concentrations (MBC). May have a dual mode of action depending on the peptide concentrations. At MIC concentrations, the peptide penetrates into the cytoplasm of target cells (tested on the Gram-negative E.coli). The two inner membrane proteins YgdD and SbmA may be required for this uptake. At concentrations higher than MIC, arasin may act by disrupting membranes. Does not show hemolytic activity. The polypeptide is Arasin 2 (Hyas araneus (Atlantic lyre crab)).